The sequence spans 698 residues: Ion-translocating oxidoreductase complex subunit C (698 aa).

4Fe-4S ferredoxin-type domains are found at residues 366–397 (TEMG…QQLY) and 407–436 (KARN…VQYY). Cys-377, Cys-380, Cys-383, Cys-387, Cys-416, Cys-419, Cys-422, and Cys-426 together coordinate [4Fe-4S] cluster.

This sequence belongs to the 4Fe4S bacterial-type ferredoxin family. RnfC subfamily. In terms of assembly, the complex is composed of six subunits: RnfA, RnfB, RnfC, RnfD, RnfE and RnfG. The cofactor is [4Fe-4S] cluster.

The protein resides in the cell inner membrane. In terms of biological role, part of a membrane-bound complex that couples electron transfer with translocation of ions across the membrane. The sequence is that of Ion-translocating oxidoreductase complex subunit C from Yersinia pseudotuberculosis serotype O:1b (strain IP 31758).